A 377-amino-acid polypeptide reads, in one-letter code: Anhydro-N-acetylmuramic acid kinase (377 aa).

Residue 14 to 21 (GTSLDGVD) participates in ATP binding.

The protein belongs to the anhydro-N-acetylmuramic acid kinase family.

It carries out the reaction 1,6-anhydro-N-acetyl-beta-muramate + ATP + H2O = N-acetyl-D-muramate 6-phosphate + ADP + H(+). It functions in the pathway amino-sugar metabolism; 1,6-anhydro-N-acetylmuramate degradation. Its pathway is cell wall biogenesis; peptidoglycan recycling. Functionally, catalyzes the specific phosphorylation of 1,6-anhydro-N-acetylmuramic acid (anhMurNAc) with the simultaneous cleavage of the 1,6-anhydro ring, generating MurNAc-6-P. Is required for the utilization of anhMurNAc either imported from the medium or derived from its own cell wall murein, and thus plays a role in cell wall recycling. This Pasteurella multocida (strain Pm70) protein is Anhydro-N-acetylmuramic acid kinase.